Consider the following 97-residue polypeptide: Co-chaperonin GroES (97 aa).

The protein belongs to the GroES chaperonin family. Heptamer of 7 subunits arranged in a ring. Interacts with the chaperonin GroEL.

The protein resides in the cytoplasm. Together with the chaperonin GroEL, plays an essential role in assisting protein folding. The GroEL-GroES system forms a nano-cage that allows encapsulation of the non-native substrate proteins and provides a physical environment optimized to promote and accelerate protein folding. GroES binds to the apical surface of the GroEL ring, thereby capping the opening of the GroEL channel. The polypeptide is Co-chaperonin GroES (Stutzerimonas stutzeri (Pseudomonas stutzeri)).